The primary structure comprises 234 residues: Large ribosomal subunit protein uL1 (234 aa).

The protein belongs to the universal ribosomal protein uL1 family. As to quaternary structure, part of the 50S ribosomal subunit.

Binds directly to 23S rRNA. The L1 stalk is quite mobile in the ribosome, and is involved in E site tRNA release. Its function is as follows. Protein L1 is also a translational repressor protein, it controls the translation of the L11 operon by binding to its mRNA. This Erwinia tasmaniensis (strain DSM 17950 / CFBP 7177 / CIP 109463 / NCPPB 4357 / Et1/99) protein is Large ribosomal subunit protein uL1.